The sequence spans 484 residues: tRNA sulfurtransferase (484 aa).

A THUMP domain is found at 61–166 (PHLIELLQCI…DKLLFIQARH (106 aa)). ATP contacts are provided by residues 183–184 (LI), K265, G287, and Q296. The cysteines at positions 344 and 456 are disulfide-linked. The 80-residue stretch at 404-483 (LGENDVILDI…FNNVQVFVKA (80 aa)) folds into the Rhodanese domain. The active-site Cysteine persulfide intermediate is the C456.

Belongs to the ThiI family.

The protein resides in the cytoplasm. The enzyme catalyses [ThiI sulfur-carrier protein]-S-sulfanyl-L-cysteine + a uridine in tRNA + 2 reduced [2Fe-2S]-[ferredoxin] + ATP + H(+) = [ThiI sulfur-carrier protein]-L-cysteine + a 4-thiouridine in tRNA + 2 oxidized [2Fe-2S]-[ferredoxin] + AMP + diphosphate. It carries out the reaction [ThiS sulfur-carrier protein]-C-terminal Gly-Gly-AMP + S-sulfanyl-L-cysteinyl-[cysteine desulfurase] + AH2 = [ThiS sulfur-carrier protein]-C-terminal-Gly-aminoethanethioate + L-cysteinyl-[cysteine desulfurase] + A + AMP + 2 H(+). It participates in cofactor biosynthesis; thiamine diphosphate biosynthesis. In terms of biological role, catalyzes the ATP-dependent transfer of a sulfur to tRNA to produce 4-thiouridine in position 8 of tRNAs, which functions as a near-UV photosensor. Also catalyzes the transfer of sulfur to the sulfur carrier protein ThiS, forming ThiS-thiocarboxylate. This is a step in the synthesis of thiazole, in the thiamine biosynthesis pathway. The sulfur is donated as persulfide by IscS. The protein is tRNA sulfurtransferase of Actinobacillus succinogenes (strain ATCC 55618 / DSM 22257 / CCUG 43843 / 130Z).